A 358-amino-acid polypeptide reads, in one-letter code: ATP-dependent (S)-NAD(P)H-hydrate dehydratase (358 aa).

One can recognise a YjeF C-terminal domain in the interval 63 to 354 (LLQSAKNVIP…QQIHQAFEEL (292 aa)). (6S)-NADPHX-binding positions include glycine 163 and 220–226 (NVVEFDR). Residues 261 to 265 (KGQHD) and 280 to 289 (GSNRRCGGQG) contribute to the ATP site. Aspartate 290 provides a ligand contact to (6S)-NADPHX.

This sequence belongs to the NnrD/CARKD family. Mg(2+) is required as a cofactor.

The enzyme catalyses (6S)-NADHX + ATP = ADP + phosphate + NADH + H(+). It carries out the reaction (6S)-NADPHX + ATP = ADP + phosphate + NADPH + H(+). Its function is as follows. Catalyzes the dehydration of the S-form of NAD(P)HX at the expense of ATP, which is converted to ADP. Together with NAD(P)HX epimerase, which catalyzes the epimerization of the S- and R-forms, the enzyme allows the repair of both epimers of NAD(P)HX, a damaged form of NAD(P)H that is a result of enzymatic or heat-dependent hydration. The chain is ATP-dependent (S)-NAD(P)H-hydrate dehydratase from Nematostella vectensis (Starlet sea anemone).